The sequence spans 419 residues: 3-isopropylmalate dehydratase large subunit (419 aa).

3 residues coordinate [4Fe-4S] cluster: cysteine 300, cysteine 360, and cysteine 363.

It belongs to the aconitase/IPM isomerase family. LeuC type 2 subfamily. As to quaternary structure, heterodimer of LeuC and LeuD. Requires [4Fe-4S] cluster as cofactor.

It catalyses the reaction (2R,3S)-3-isopropylmalate = (2S)-2-isopropylmalate. It functions in the pathway amino-acid biosynthesis; L-leucine biosynthesis; L-leucine from 3-methyl-2-oxobutanoate: step 2/4. In terms of biological role, catalyzes the isomerization between 2-isopropylmalate and 3-isopropylmalate, via the formation of 2-isopropylmaleate. In Acetivibrio thermocellus (strain ATCC 27405 / DSM 1237 / JCM 9322 / NBRC 103400 / NCIMB 10682 / NRRL B-4536 / VPI 7372) (Clostridium thermocellum), this protein is 3-isopropylmalate dehydratase large subunit.